A 129-amino-acid polypeptide reads, in one-letter code: Large ribosomal subunit protein bL17 (129 aa).

This sequence belongs to the bacterial ribosomal protein bL17 family. As to quaternary structure, part of the 50S ribosomal subunit. Contacts protein L32.

This Stutzerimonas stutzeri (strain A1501) (Pseudomonas stutzeri) protein is Large ribosomal subunit protein bL17.